The primary structure comprises 196 residues: Ribonuclease HII (196 aa).

An RNase H type-2 domain is found at 13–196 (LLVAGVDEAG…SFSPLKKKLF (184 aa)). Residues Asp19, Glu20, and Asp111 each coordinate a divalent metal cation.

It belongs to the RNase HII family. Requires Mn(2+) as cofactor. It depends on Mg(2+) as a cofactor.

It is found in the cytoplasm. It catalyses the reaction Endonucleolytic cleavage to 5'-phosphomonoester.. Its function is as follows. Endonuclease that specifically degrades the RNA of RNA-DNA hybrids. The sequence is that of Ribonuclease HII (rnhB) from Aquifex aeolicus (strain VF5).